Consider the following 642-residue polypeptide: Uromodulin (642 aa).

The first 24 residues, 1-24 (MGIPLTWMLLVMMVTSWFTLAEAS), serve as a signal peptide directing secretion. N-linked (GlcNAc...) asparagine glycosylation is found at Asn25 and Asn38. One can recognise an EGF-like 1 domain in the interval 28 to 64 (EARRCSECHNNATCTVDGVVTTCSCQTGFTGDGLVCE). Intrachain disulfides connect Cys32–Cys41, Cys35–Cys50, Cys52–Cys63, Cys69–Cys82, Cys77–Cys91, Cys93–Cys105, Cys111–Cys125, Cys119–Cys134, Cys136–Cys147, Cys149–Cys160, Cys154–Cys171, Cys175–Cys268, Cys196–Cys283, Cys218–Cys256, Cys224–Cys288, Cys249–Cys257, Cys298–Cys307, Cys301–Cys316, Cys318–Cys348, Cys336–Cys426, and Cys367–Cys390. Residues 65–106 (DMDECATPWTHNCSNSSCVNTPGSFKCSCQDGFRLTPELSCT) form the EGF-like 2; calcium-binding domain. Residues Asn76 and Asn79 are each glycosylated (N-linked (GlcNAc...) asparagine). An EGF-like 3; calcium-binding domain is found at 107–148 (DVDECSEQGLSNCHALATCVNTEGDYLCVCPEGFTGDGWYCE). Positions 149–172 (CSPGSCEPGLDCLPQGPDGKLVCQ) are beta hairpin. Residues 173-292 (DPCNTYETLT…CNLAYCTDPS (120 aa)) form a D10C region. A glycan (N-linked (GlcNAc...) asparagine) is linked at Asn233. An N-linked (GlcNAc...) asparagine glycan is attached at Asn276. In terms of domain architecture, EGF-like 4 spans 293-324 (SVEGTCEECRVDEDCISDNGRWRCQCKQDSNI). N-linked (GlcNAc...) asparagine glycosylation occurs at Asn323. The interval 335–430 (ECGANDIKMS…RMNFECSYPL (96 aa)) is ZP-N. One can recognise a ZP domain in the interval 335–590 (ECGANDIKMS…PTCSGTRFRS (256 aa)). Asn397 and Asn448 each carry an N-linked (GlcNAc...) asparagine glycan. The segment at 431-454 (DMKVSLKTSLQPMVSALNISLGGT) is flexible ZP-N/ZP-C linker; important for secretion and polymerization into filaments. The internal hydrophobic patch (IHP) stretch occupies residues 455–465 (GKFTVRMALFQ). Residues 455–590 (GKFTVRMALF…PTCSGTRFRS (136 aa)) form a ZP-C region. 3 cysteine pairs are disulfide-bonded: Cys507/Cys567, Cys528/Cys583, and Cys572/Cys579. N-linked (GlcNAc...) asparagine glycosylation occurs at Asn514. Positions 587-590 (RFRS) are essential for cleavage by HPN. The tract at residues 599 to 607 (VLNLGPITR) is external hydrophobic patch (EHP); regulates polymerization into filaments. A lipid anchor (GPI-anchor amidated alanine) is attached at Ala618. The propeptide at 619–642 (SSNLRLLSIWLLLFPSATLIFMVQ) is removed in mature form.

In terms of assembly, homodimer that then polymerizes into long filaments. The filaments can additionally assemble laterally to form a sheet. The filaments consist of a zigzag-shaped backbone with laterally protruding arms which interact with bacterial adhesin fimH. Two fimH molecules can bind to a single UMOD monomer. Post-translationally, N-glycosylated. Proteolytically cleaved at a conserved C-terminal proteolytic cleavage site to generate the secreted form found in urine. This cleavage is catalyzed by HPN. In terms of tissue distribution, detected in urine (secreted form). Detected in kidney thick ascending limb epithelial cells (at protein level).

The protein localises to the secreted. The protein resides in the apical cell membrane. It is found in the basolateral cell membrane. It localises to the cell projection. Its subcellular location is the cilium membrane. Functions in biogenesis and organization of the apical membrane of epithelial cells of the thick ascending limb of Henle's loop (TALH), where it promotes formation of complex filamentous gel-like structure that may play a role in the water barrier permeability. May serve as a receptor for binding and endocytosis of cytokines (IL-1, IL-2) and TNF. Facilitates neutrophil migration across renal epithelia. In terms of biological role, in the urine, may contribute to colloid osmotic pressure, retards passage of positively charged electrolytes and inhibits formation of liquid containing supersaturated salts and subsequent formation of salt crystals. Protects against urinary tract infections by binding to type 1 fimbriated E.coli. Binds to the bacterial adhesin fimH which mediates the stable formation of bacterial aggregates, prevents the binding of E.coli to uroplakins UPK1A and UPK1B which act as urothelial receptors for type I fimbriae, and allows for pathogen clearance through micturation. Also promotes aggregation of other bacteria including K.pneumoniae, P.aeruginosa and S.mitis and so may also protect against other uropathogens. The polypeptide is Uromodulin (Umod) (Mus musculus (Mouse)).